The sequence spans 511 residues: ATP synthase subunit alpha 1 (511 aa).

Position 174–181 (174–181) interacts with ATP; the sequence is GDRQTGKT.

Belongs to the ATPase alpha/beta chains family. As to quaternary structure, F-type ATPases have 2 components, CF(1) - the catalytic core - and CF(0) - the membrane proton channel. CF(1) has five subunits: alpha(3), beta(3), gamma(1), delta(1), epsilon(1). CF(0) has four main subunits: a(1), b(1), b'(1) and c(9-12).

Its subcellular location is the cell inner membrane. The catalysed reaction is ATP + H2O + 4 H(+)(in) = ADP + phosphate + 5 H(+)(out). In terms of biological role, produces ATP from ADP in the presence of a proton gradient across the membrane. The alpha chain is a regulatory subunit. This chain is ATP synthase subunit alpha 1, found in Chlorobium luteolum (strain DSM 273 / BCRC 81028 / 2530) (Pelodictyon luteolum).